The primary structure comprises 198 residues: T-cell surface glycoprotein CD3 epsilon chain (198 aa).

Residues 1 to 21 (MQSGTRWRVLGLCLLSIGVWG) form the signal peptide. Residues 22-117 (QDGNEEMGSI…RVCENCMEMD (96 aa)) are Extracellular-facing. Residues 37–107 (QVSISGTTVI…DASHHLYLKA (71 aa)) form the Ig-like domain. An intrachain disulfide couples cysteine 49 to cysteine 89. The chain crosses the membrane as a helical span at residues 118–138 (VMAVATIVIVDICITLGLLLL). Residues 139–198 (VYYWSKNRKAKAKPVTRGAGAGGRQRGQNKERPPPVPNPDYEPIRKGQQDLYSGLNQRRI) lie on the Cytoplasmic side of the membrane. The segment at 152 to 198 (PVTRGAGAGGRQRGQNKERPPPVPNPDYEPIRKGQQDLYSGLNQRRI) is disordered. Residues 166 to 183 (QNKERPPPVPNPDYEPIR) form an NUMB-binding region region. Positions 169–196 (ERPPPVPNPDYEPIRKGQQDLYSGLNQR) constitute an ITAM domain. The interval 170–177 (RPPPVPNP) is proline-rich sequence. Residues tyrosine 179 and tyrosine 190 each carry the phosphotyrosine modification. A compositionally biased stretch (polar residues) spans 188–198 (DLYSGLNQRRI).

As to quaternary structure, the TCR-CD3 complex is composed of a CD3D/CD3E and a CD3G/CD3E heterodimers that preferentially associate with TCRalpha and TCRbeta, respectively, to form TCRalpha/CD3E/CD3G and TCRbeta/CD3G/CD3E trimers. In turn, the hexamer interacts with CD3Z homodimer to form the TCR-CD3 complex. Alternatively, TCRalpha and TCRbeta can be replaced by TCRgamma and TCRdelta. Interacts with CD6. Interacts (via Proline-rich sequence) with NCK1; the interaction is ligand dependent but independent of tyrosine kinase activation. Phosphorylated on Tyr residues after T-cell receptor triggering by LCK in association with CD4/CD8.

It is found in the cell membrane. Part of the TCR-CD3 complex present on T-lymphocyte cell surface that plays an essential role in adaptive immune response. When antigen presenting cells (APCs) activate T-cell receptor (TCR), TCR-mediated signals are transmitted across the cell membrane by the CD3 chains CD3D, CD3E, CD3G and CD3Z. All CD3 chains contain immunoreceptor tyrosine-based activation motifs (ITAMs) in their cytoplasmic domain. Upon TCR engagement, these motifs become phosphorylated by Src family protein tyrosine kinases LCK and FYN, resulting in the activation of downstream signaling pathways. In addition of this role of signal transduction in T-cell activation, CD3E plays an essential role in correct T-cell development. Also participates in internalization and cell surface down-regulation of TCR-CD3 complexes via endocytosis sequences present in CD3E cytosolic region. In addition to its role as a TCR coreceptor, it serves as a receptor for ITPRIPL1. Ligand recognition inhibits T-cell activation by promoting interaction with NCK1, which prevents CD3E-ZAP70 interaction and blocks the ERK-NFkB signaling cascade and calcium influx. In Macaca fascicularis (Crab-eating macaque), this protein is T-cell surface glycoprotein CD3 epsilon chain (CD3E).